Consider the following 548-residue polypeptide: Probable malate:quinone oxidoreductase (548 aa).

The disordered stretch occupies residues 520–548 (YDRPQAADSTPKPQLKPQPVQKEVADIAL). A compositionally biased stretch (low complexity) spans 530–541 (PKPQLKPQPVQK).

It belongs to the MQO family. The cofactor is FAD.

It catalyses the reaction (S)-malate + a quinone = a quinol + oxaloacetate. It participates in carbohydrate metabolism; tricarboxylic acid cycle; oxaloacetate from (S)-malate (quinone route): step 1/1. The chain is Probable malate:quinone oxidoreductase from Shigella dysenteriae serotype 1 (strain Sd197).